The primary structure comprises 373 residues: Cobalt-precorrin-5B C(1)-methyltransferase (373 aa).

This sequence belongs to the CbiD family.

The enzyme catalyses Co-precorrin-5B + S-adenosyl-L-methionine = Co-precorrin-6A + S-adenosyl-L-homocysteine. Its pathway is cofactor biosynthesis; adenosylcobalamin biosynthesis; cob(II)yrinate a,c-diamide from sirohydrochlorin (anaerobic route): step 6/10. Functionally, catalyzes the methylation of C-1 in cobalt-precorrin-5B to form cobalt-precorrin-6A. The sequence is that of Cobalt-precorrin-5B C(1)-methyltransferase from Polaromonas sp. (strain JS666 / ATCC BAA-500).